A 369-amino-acid chain; its full sequence is Phospho-N-acetylmuramoyl-pentapeptide-transferase (369 aa).

The next 10 helical transmembrane spans lie at 2-22 (IAILLAVAFGITFTLFTTPFF), 54-74 (GLVIVVASIISYFLANFFLGL), 80-100 (GLLVIFMFVGMSLVGFLDDIL), 113-133 (FYKVVLQSFIAVPFALLTFLV), 158-178 (ALFSLGIIGVFSAWVLYLLWI), 195-215 (LDGLAAGAMIFTMLAYVVIGF), 241-261 (PLDMSILAAAILGSLLGFLWW), 268-288 (IMMGDTGALALGGAAAALSIL), 293-313 (LLFLVLGGLFVIEAGSVILQI), and 347-367 (FWIIAGLFTALGIGLFYADWL).

Belongs to the glycosyltransferase 4 family. MraY subfamily. The cofactor is Mg(2+).

It is found in the cell membrane. It carries out the reaction UDP-N-acetyl-alpha-D-muramoyl-L-alanyl-gamma-D-glutamyl-meso-2,6-diaminopimeloyl-D-alanyl-D-alanine + di-trans,octa-cis-undecaprenyl phosphate = di-trans,octa-cis-undecaprenyl diphospho-N-acetyl-alpha-D-muramoyl-L-alanyl-D-glutamyl-meso-2,6-diaminopimeloyl-D-alanyl-D-alanine + UMP. It functions in the pathway cell wall biogenesis; peptidoglycan biosynthesis. Its function is as follows. Catalyzes the initial step of the lipid cycle reactions in the biosynthesis of the cell wall peptidoglycan: transfers peptidoglycan precursor phospho-MurNAc-pentapeptide from UDP-MurNAc-pentapeptide onto the lipid carrier undecaprenyl phosphate, yielding undecaprenyl-pyrophosphoryl-MurNAc-pentapeptide, known as lipid I. This Tropheryma whipplei (strain TW08/27) (Whipple's bacillus) protein is Phospho-N-acetylmuramoyl-pentapeptide-transferase.